We begin with the raw amino-acid sequence, 213 residues long: MAYTLPELGYAYDALEPHFDAKTMEIHHSKHHQAYINNANAALEAHPELLEKCPGALIKDLSQVPAEKRIAVRNNVGGHVNHTLFWKGLKTGTTLQGALKEAIERDFGSVEAFQSEFEKAATTRVGSGWAWLVLEEGKLAVVSTANQDNPLMGKEVAGVSGYPILVLDVWEHAYYLNYQNRRPDFIKAFWNVVNWDEAARRFEEKVATCGCAK.

The Mn(2+) site is built by His27, His82, Asp168, and His172.

This sequence belongs to the iron/manganese superoxide dismutase family. In terms of assembly, homodimer. Mn(2+) serves as cofactor.

It catalyses the reaction 2 superoxide + 2 H(+) = H2O2 + O2. In terms of biological role, destroys superoxide anion radicals which are normally produced within the cells and which are toxic to biological systems. The sequence is that of Superoxide dismutase [Mn] (sodA) from Mannheimia haemolytica (Pasteurella haemolytica).